The following is a 447-amino-acid chain: MYRIKNENLDFKIDSLGECKQNNPLIDFYASEGSSHFVNEKNKIKFSVYRNEDKGDRYEDVLLEKAGPREKIYFVPRHVKAAITTCGGLCPGFNDVIRSIVRTLWKIYGVRNIYGVKFGYQGLLPESNSPFINLNPDVVDDINKFGGTILGSSRGGIKPVEIVDTLERMNINMIFNIGGDGTQKGSLLIAEEIEKRNLKIAVVGIPKTVDNDFMFVQKSFGFETAVEQAVAAVAGAHFEANSAYNGIGLVKVMGRDSGFIAAHTALSSNDVNFCLIPELDFDIEGPNGFLVHLERRLLEKESLEEIPHAVILIAEGAGQKYFDHFPKKKDDSGNLLYEDIGLYIKDKITEYFKAKNIQFTLKYIDPSYIIRSSPANASDSLYCARLGSNAVHAAMAGKTKMLISLWSTKFVHIPIKMAVIDRNKVNPNGSFWRDVLSSTGQPISMKN.

Residues G88, 154–155 (RG), and 179–182 (GDGT) each bind ATP. D180 is a Mg(2+) binding site. Substrate-binding positions include 208-210 (TVD), 253-255 (MGR), E315, and 368-371 (YIIR). D210 serves as the catalytic Proton acceptor.

This sequence belongs to the phosphofructokinase type A (PFKA) family. PPi-dependent PFK group II subfamily. Atypical ATP-dependent clade 'X' sub-subfamily. In terms of assembly, homodimer. Requires Mg(2+) as cofactor.

The protein localises to the cytoplasm. The catalysed reaction is beta-D-fructose 6-phosphate + ATP = beta-D-fructose 1,6-bisphosphate + ADP + H(+). Its pathway is carbohydrate degradation; glycolysis; D-glyceraldehyde 3-phosphate and glycerone phosphate from D-glucose: step 3/4. In terms of biological role, catalyzes the phosphorylation of D-fructose 6-phosphate to fructose 1,6-bisphosphate by ATP, the first committing step of glycolysis. The polypeptide is ATP-dependent 6-phosphofructokinase (Borreliella burgdorferi (strain ATCC 35210 / DSM 4680 / CIP 102532 / B31) (Borrelia burgdorferi)).